A 397-amino-acid polypeptide reads, in one-letter code: MSESVHTNTSLWSKGMKAVIVAQFLSAFGDNALLFATLALLKAQFYPEWSQPILQMVFVGAYILFAPFVGQVADSFAKGRVMMFANGLKLLGAASICFGINPFLGYTLVGVGAAAYSPAKYGILGELTTGSKLVKANGLMEASTIAAILLGSVAGGVLADWHVLVALAACALAYGGAVVANIYIPKLAAARPGQSWNLINMTRSFLNACTSLWRNGETRFSLVGTSLFWGAGVTLRFLLVLWVPVALGITDNATPTYLNAMVAIGIVVGAGAAAKLVTLETVSRCMPAGILIGVVVLIFSLQHELLPAYALLMLIGVMGGFFVVPLNALLQERGKKSVGAGNAIAVQNLGENSAMLLMLGIYSLAVMIGIPVVPIGIGFGALFALAITALWIWQRRH.

At 1–17 (MSESVHTNTSLWSKGMK) the chain is on the periplasmic side. Residues 18-38 (AVIVAQFLSAFGDNALLFATL) traverse the membrane as a helical segment. Topologically, residues 39–52 (ALLKAQFYPEWSQP) are cytoplasmic. Residues 53-73 (ILQMVFVGAYILFAPFVGQVA) form a helical membrane-spanning segment. The Periplasmic portion of the chain corresponds to 74-90 (DSFAKGRVMMFANGLKL). The helical transmembrane segment at 91–111 (LGAASICFGINPFLGYTLVGV) threads the bilayer. Topologically, residues 112 to 144 (GAAAYSPAKYGILGELTTGSKLVKANGLMEAST) are cytoplasmic. Residues 145–165 (IAAILLGSVAGGVLADWHVLV) traverse the membrane as a helical segment. Residue Ala166 is a topological domain, periplasmic. Residues 167–187 (LAACALAYGGAVVANIYIPKL) traverse the membrane as a helical segment. Over 188-226 (AAARPGQSWNLINMTRSFLNACTSLWRNGETRFSLVGTS) the chain is Cytoplasmic. Residues 227–247 (LFWGAGVTLRFLLVLWVPVAL) traverse the membrane as a helical segment. Over 248–256 (GITDNATPT) the chain is Periplasmic. A helical transmembrane segment spans residues 257-277 (YLNAMVAIGIVVGAGAAAKLV). The Cytoplasmic segment spans residues 278–280 (TLE). The helical transmembrane segment at 281-301 (TVSRCMPAGILIGVVVLIFSL) threads the bilayer. Topologically, residues 302–304 (QHE) are periplasmic. The chain crosses the membrane as a helical span at residues 305–325 (LLPAYALLMLIGVMGGFFVVP). Topologically, residues 326-343 (LNALLQERGKKSVGAGNA) are cytoplasmic. Residues 344 to 364 (IAVQNLGENSAMLLMLGIYSL) traverse the membrane as a helical segment. Residues 365–366 (AV) are Periplasmic-facing. Residues 367-387 (MIGIPVVPIGIGFGALFALAI) traverse the membrane as a helical segment. Residues 388-397 (TALWIWQRRH) are Cytoplasmic-facing.

It belongs to the major facilitator superfamily. LplT (TC 2.A.1.42) family.

It localises to the cell inner membrane. In terms of biological role, catalyzes the facilitated diffusion of 2-acyl-glycero-3-phosphoethanolamine (2-acyl-GPE) into the cell. This is Lysophospholipid transporter LplT from Escherichia coli O8 (strain IAI1).